The following is a 205-amino-acid chain: Outer-membrane lipoprotein LolB (205 aa).

An N-terminal signal peptide occupies residues 1–17 (MRLRLFLAASALALLSG). Cys-18 is lipidated: N-palmitoyl cysteine. A lipid anchor (S-diacylglycerol cysteine) is attached at Cys-18.

It belongs to the LolB family. As to quaternary structure, monomer.

The protein localises to the cell outer membrane. In terms of biological role, plays a critical role in the incorporation of lipoproteins in the outer membrane after they are released by the LolA protein. This is Outer-membrane lipoprotein LolB from Pseudomonas aeruginosa (strain LESB58).